The primary structure comprises 447 residues: N-succinylarginine dihydrolase (447 aa).

Substrate-binding positions include alanine 19–serine 28, asparagine 110, and histidine 137–arginine 138. Glutamate 174 is an active-site residue. Arginine 212 provides a ligand contact to substrate. The active site involves histidine 248. Residues aspartate 250 and asparagine 359 each contribute to the substrate site. The active-site Nucleophile is the cysteine 365.

The protein belongs to the succinylarginine dihydrolase family. In terms of assembly, homodimer.

The catalysed reaction is N(2)-succinyl-L-arginine + 2 H2O + 2 H(+) = N(2)-succinyl-L-ornithine + 2 NH4(+) + CO2. It functions in the pathway amino-acid degradation; L-arginine degradation via AST pathway; L-glutamate and succinate from L-arginine: step 2/5. Functionally, catalyzes the hydrolysis of N(2)-succinylarginine into N(2)-succinylornithine, ammonia and CO(2). The protein is N-succinylarginine dihydrolase of Escherichia coli O6:K15:H31 (strain 536 / UPEC).